Here is a 396-residue protein sequence, read N- to C-terminus: Gap junction gamma-1 protein (396 aa).

Residues 1–22 (MSWSFLTRLLEEIHNHSTFVGK) are Cytoplasmic-facing. A helical transmembrane segment spans residues 23 to 45 (IWLTVLIVFRIVLTAVGGESIYY). The Extracellular segment spans residues 46–75 (DEQSKFVCNTEQPGCENVCYDAFAPLSHVR). The helical transmembrane segment at 76–95 (FWVFQIILVATPSVMYLGYA) threads the bilayer. Over 96-175 (IHKIAKMEHG…RRIREDGLMK (80 aa)) the chain is Cytoplasmic. Positions 145 to 165 (ELESEKENKEQNQSKPKHDGR) are disordered. A compositionally biased stretch (basic and acidic residues) spans 147–156 (ESEKENKEQN). A helical membrane pass occupies residues 176–198 (IYVLQLLARTMFEVGFLIGQYFL). The Extracellular portion of the chain corresponds to 199-228 (YGFQVHPFYVCSRVPCPHKIDCFISRPTEK). A helical membrane pass occupies residues 229 to 248 (TIFLLIMYGVTGLCLLLNIW). The Cytoplasmic portion of the chain corresponds to 249–396 (EMLHLGFGTI…SGDGKTSVWI (148 aa)). Positions 357–396 (NHQNNPHGPREKKAKVGSKAGSNKSSASSKSGDGKTSVWI) are disordered. A compositionally biased stretch (low complexity) spans 373 to 396 (GSKAGSNKSSASSKSGDGKTSVWI).

It belongs to the connexin family. Gamma-type subfamily. As to quaternary structure, a connexon is composed of a hexamer of connexins. Interacts with CNST.

The protein resides in the cell membrane. Its subcellular location is the cell junction. The protein localises to the gap junction. Functionally, one gap junction consists of a cluster of closely packed pairs of transmembrane channels, the connexons, through which materials of low MW diffuse from one cell to a neighboring cell. This chain is Gap junction gamma-1 protein (GJC1), found in Sus scrofa (Pig).